A 300-amino-acid chain; its full sequence is Lipoyl synthase 2 (300 aa).

[4Fe-4S] cluster-binding residues include Cys46, Cys51, Cys57, Cys72, Cys76, Cys79, and Ser294. Positions 58-283 (YAQKTATFLL…GKLAREMGFS (226 aa)) constitute a Radical SAM core domain.

This sequence belongs to the radical SAM superfamily. Lipoyl synthase family. Requires [4Fe-4S] cluster as cofactor.

It localises to the cytoplasm. It catalyses the reaction [[Fe-S] cluster scaffold protein carrying a second [4Fe-4S](2+) cluster] + N(6)-octanoyl-L-lysyl-[protein] + 2 oxidized [2Fe-2S]-[ferredoxin] + 2 S-adenosyl-L-methionine + 4 H(+) = [[Fe-S] cluster scaffold protein] + N(6)-[(R)-dihydrolipoyl]-L-lysyl-[protein] + 4 Fe(3+) + 2 hydrogen sulfide + 2 5'-deoxyadenosine + 2 L-methionine + 2 reduced [2Fe-2S]-[ferredoxin]. It participates in protein modification; protein lipoylation via endogenous pathway; protein N(6)-(lipoyl)lysine from octanoyl-[acyl-carrier-protein]: step 2/2. Its function is as follows. Catalyzes the radical-mediated insertion of two sulfur atoms into the C-6 and C-8 positions of the octanoyl moiety bound to the lipoyl domains of lipoate-dependent enzymes, thereby converting the octanoylated domains into lipoylated derivatives. This is Lipoyl synthase 2 from Nostoc sp. (strain PCC 7120 / SAG 25.82 / UTEX 2576).